The primary structure comprises 226 residues: Probable transcriptional regulator RABBIT EARS (226 aa).

The segment at 55–77 (YSCSFCGREFKSAQALGGHMNVH) adopts a C2H2-type zinc-finger fold. The disordered stretch occupies residues 80–102 (DRARLKQQSLSPSSTDQATPPEC). A compositionally biased stretch (polar residues) spans 85–97 (KQQSLSPSSTDQA). The short motif at 212–216 (LDLEL) is the EAR-like (transcriptional repression) element.

As to expression, strongly expressed in inflorescences and flowers, and weakly in siliques, seedlings and roots. In flowers, it is expressed in petal primordia and their precursor cells. Also expressed in the lateral root caps and the basal cells of lateral roots.

Its subcellular location is the nucleus. Its function is as follows. Probable transcriptional regulator essential for petal development. Required for the early development of the organ primordia of the second whorl. Acts downstream of AP1 and PTL. The chain is Probable transcriptional regulator RABBIT EARS (RBE) from Arabidopsis thaliana (Mouse-ear cress).